The primary structure comprises 281 residues: MVNEKKMLPKRIILMRHGESAGNIDAGAYATTPDHKIPLTEEGRAQAREAGKKMRALISTQSGGACGENWRVYFYVSPYERTRTTLREVGKGFSRKRVIGVREECRIREQDFGNFQVEERMRVVKETRERFGRFFYRFPEGESAADVYDRVSSFLESMWRDVDMNRHQVDPSSELNLVIVSHGLTSRVFLTKWFKWTVAEFERLNNFGNCEFRVMELGASGEYTFAIHHSEEEMLDWGMSKDMIDDQKDRVDGCRVTTSNDSCSLHLNEYFDLLDVTDDEE.

Catalysis depends on H17, which acts as the Tele-phosphohistidine intermediate. E109 functions as the Proton donor/acceptor in the catalytic mechanism.

Belongs to the phosphoglycerate mutase family.

Its function is as follows. May play a role in carbohydrates metabolism. In Arabidopsis thaliana (Mouse-ear cress), this protein is Phosphoglycerate mutase-like protein AT74H.